The primary structure comprises 260 residues: NAD kinase (260 aa).

Catalysis depends on D54, which acts as the Proton acceptor. NAD(+) is bound by residues 54–55 (DG), 123–124 (ND), R150, D152, and 163–168 (TAYSLS).

Belongs to the NAD kinase family. Requires a divalent metal cation as cofactor.

The protein resides in the cytoplasm. The enzyme catalyses NAD(+) + ATP = ADP + NADP(+) + H(+). Involved in the regulation of the intracellular balance of NAD and NADP, and is a key enzyme in the biosynthesis of NADP. Catalyzes specifically the phosphorylation on 2'-hydroxyl of the adenosine moiety of NAD to yield NADP. The polypeptide is NAD kinase (Caldicellulosiruptor saccharolyticus (strain ATCC 43494 / DSM 8903 / Tp8T 6331)).